The sequence spans 334 residues: BTB and MATH domain-containing protein 39 (334 aa).

The 128-residue stretch at 14-141 (IVTLVFNIYN…EGRFQIEFDL (128 aa)) folds into the MATH domain. One can recognise a BTB domain in the interval 164–229 (ADGELITDGK…LQLDSFEVSV (66 aa)).

The sequence is that of BTB and MATH domain-containing protein 39 (bath-39) from Caenorhabditis elegans.